Consider the following 415-residue polypeptide: Multidrug resistance protein MdtA (415 aa).

An N-terminal signal peptide occupies residues 1 to 21 (MKGSYKSRWVIVIVVVIAAIA). A compositionally biased stretch (polar residues) spans 31-47 (DSQSAAPGATKQAQQSP). Disordered stretches follow at residues 31 to 56 (DSQS…GMRA) and 390 to 415 (VVET…GARS). Basic and acidic residues predominate over residues 399–415 (PEEKATSREYAKKGARS).

The protein belongs to the membrane fusion protein (MFP) (TC 8.A.1) family. In terms of assembly, part of a tripartite efflux system composed of MdtA, MdtB and MdtC.

The protein resides in the cell inner membrane. Functionally, the MdtABC tripartite complex confers resistance against novobiocin and deoxycholate. This Escherichia coli O6:H1 (strain CFT073 / ATCC 700928 / UPEC) protein is Multidrug resistance protein MdtA.